Consider the following 58-residue polypeptide: Small ribosomal subunit protein bS21 (58 aa).

The protein belongs to the bacterial ribosomal protein bS21 family.

The polypeptide is Small ribosomal subunit protein bS21 (Lactobacillus johnsonii (strain CNCM I-12250 / La1 / NCC 533)).